The following is a 141-amino-acid chain: Nucleoside diphosphate kinase (141 aa).

ATP-binding residues include Lys-9, Phe-57, Arg-85, Thr-91, Arg-102, and Asn-112. Catalysis depends on His-115, which acts as the Pros-phosphohistidine intermediate.

Belongs to the NDK family. As to quaternary structure, homotetramer. Mg(2+) serves as cofactor.

It is found in the cytoplasm. The catalysed reaction is a 2'-deoxyribonucleoside 5'-diphosphate + ATP = a 2'-deoxyribonucleoside 5'-triphosphate + ADP. The enzyme catalyses a ribonucleoside 5'-diphosphate + ATP = a ribonucleoside 5'-triphosphate + ADP. Major role in the synthesis of nucleoside triphosphates other than ATP. The ATP gamma phosphate is transferred to the NDP beta phosphate via a ping-pong mechanism, using a phosphorylated active-site intermediate. The polypeptide is Nucleoside diphosphate kinase (Chlamydia trachomatis serovar A (strain ATCC VR-571B / DSM 19440 / HAR-13)).